Consider the following 242-residue polypeptide: MQIFYFHVPAEMPADASPDAAVVIDVLRATTTIAWALHHGAEAVQAFADLEDLRAAAEAWPADQRLLLGERGGQTLAGFDLGNSPVAVVPATVSGKRLFMSTTNGTRALDRVRQVPLLVTAALPNREAVAQRLLKESPETVAIVGSGWEGTYSLEDSLAAGALAARLQELSQAVTLANDEATAATALWQQWRHDPEACLRTASHGQRLIRLGDHDDDFRCCAGLDQLSVVPTQQSPGVLQAI.

It belongs to the ComB family. The cofactor is Mg(2+).

It carries out the reaction (2R)-O-phospho-3-sulfolactate + H2O = (2R)-3-sulfolactate + phosphate. The polypeptide is Probable 2-phosphosulfolactate phosphatase (Parasynechococcus marenigrum (strain WH8102)).